The primary structure comprises 217 residues: Large ribosomal subunit protein uL4 (217 aa).

It belongs to the universal ribosomal protein uL4 family. In terms of assembly, part of the 50S ribosomal subunit.

Its function is as follows. One of the primary rRNA binding proteins, this protein initially binds near the 5'-end of the 23S rRNA. It is important during the early stages of 50S assembly. It makes multiple contacts with different domains of the 23S rRNA in the assembled 50S subunit and ribosome. Forms part of the polypeptide exit tunnel. The protein is Large ribosomal subunit protein uL4 of Koribacter versatilis (strain Ellin345).